Here is a 494-residue protein sequence, read N- to C-terminus: Neuronal acetylcholine receptor subunit alpha-6 (494 aa).

An N-terminal signal peptide occupies residues 1 to 25 (MLTSKGQGFLHGGLCLWLCVFTPFF). The Extracellular portion of the chain corresponds to 26-239 (KGCVGCATEE…ITYSFYIRRL (214 aa)). Residues asparagine 54 and asparagine 171 are each glycosylated (N-linked (GlcNAc...) asparagine). 2 disulfide bridges follow: cysteine 158/cysteine 172 and cysteine 222/cysteine 223. The next 3 helical transmembrane spans lie at 240–264 (PMFYTINLIIPCLFISFLTVLVFYL), 272–290 (VTLCISVLLSLTVFLLVIT), and 306–327 (YLLFTMIFVTLSIVVTVFVLNI). Over 328 to 465 (HYRTPTTHTM…WKYVAMVVDR (138 aa)) the chain is Cytoplasmic. Serine 401 is modified (phosphoserine). The helical transmembrane segment at 466–484 (VFLWVFIIVCVFGTAGLFL) threads the bilayer.

It belongs to the ligand-gated ion channel (TC 1.A.9) family. Acetylcholine receptor (TC 1.A.9.1) subfamily. Alpha-6/CHRNA6 sub-subfamily. Neuronal AChR is composed of two different types of subunits: alpha and non-alpha (beta). CHRNA6/alpha-6 subunit can be combined to CHRNB2/beta-2, CHRNA4/alpha-4 and CHRNB3/beta-3 to give rise to functional receptors. Heteropentamers containing CHRNB3 have an stoichiometry of (CHRNA6:CHRNB2)2:CHRNB3. Interacts with LYPD6.

It is found in the synaptic cell membrane. It catalyses the reaction Ca(2+)(in) = Ca(2+)(out). The enzyme catalyses K(+)(in) = K(+)(out). The catalysed reaction is Na(+)(in) = Na(+)(out). Its activity is regulated as follows. Activated by a myriad of ligands such as acetylcholine, cytisine and nicotine. CHRNA6 nAChR activity is inhibited by the antagonists alpha-conotoxin MII and PIA, a small disulfide-constrained peptides from cone snails. In terms of biological role, component of neuronal acetylcholine receptors (nAChRs) that function as pentameric, ligand-gated cation channels with high calcium permeability among other activities. nAChRs are excitatory neurotrasnmitter receptors formed by a collection of nAChR subunits known to mediate synaptic transmission in the nervous system and the neuromuscular junction. Each nAchR subunit confers differential attributes to channel properties, including activation, deactivation and desensitization kinetics, pH sensitivity, cation permeability, and binding to allosteric modulators. CHRNA6 forms pentameric channels with CHRNB2, CHRNB3 and CHRNA4 that exhibit high sensitivity to ACh and nicotine and are predominantly expressed in only a few brain areas, including dopaminergic neurons, norepirephrine neurons and cells of the visual system. nAChrs containing CHRNA6 subunits mediate endogenous cholinergic modulation of dopamine and gamma-aminobutyric acid (GABA) release in response to nicotine at nerve terminals. The protein is Neuronal acetylcholine receptor subunit alpha-6 of Homo sapiens (Human).